Consider the following 373-residue polypeptide: MSLQSSIRADSNCTLPNNPVCVLLPVDFIVAAMASSTSSAMAKWAAQAARGFAAAAPSSGKGRKVAVLGAAGGIGQPLSMLMKMNSQVSSLSLYDIAGTPGVAADVSHINTKAQVKGFDKDGLAEALRGCDLVIIPAGVPRKPGMTRDDLFKINAGIVRDLVTAVGQHCPGAVLNIISNPVNSTVPIAAEQLKKMGVYDKRKVMGVTTLDVVRAKTFYAEKNGLDVASVDVPVVGGHAGVTILPLFSQATPKATMSAEVLDALTKRTQDGGTEVVQAKAGKGSATLSMAYAAALFADSCLRGLNGAPVVECTYVESTVTDAPYFASKVKLSTEGVDKIHDLGPLSDYEKAGLKAMMPELLASIEKGVQFVKGA.

Residues 69-75 and Asp-95 each bind NAD(+); that span reads GAAGGIG. The substrate site is built by Arg-141 and Arg-147. NAD(+) contacts are provided by residues Asn-154 and 177-179; that span reads ISN. 2 residues coordinate substrate: Asn-179 and Arg-213. Catalysis depends on His-237, which acts as the Proton acceptor. Met-288 lines the NAD(+) pocket.

The protein belongs to the LDH/MDH superfamily. MDH type 1 family. In terms of assembly, homodimer.

The protein localises to the mitochondrion matrix. The enzyme catalyses (S)-malate + NAD(+) = oxaloacetate + NADH + H(+). The polypeptide is Malate dehydrogenase, mitochondrial (Chlamydomonas reinhardtii (Chlamydomonas smithii)).